Reading from the N-terminus, the 91-residue chain is Small ribosomal subunit protein uS15 (91 aa).

The protein belongs to the universal ribosomal protein uS15 family. As to quaternary structure, part of the 30S ribosomal subunit. Forms a bridge to the 50S subunit in the 70S ribosome, contacting the 23S rRNA.

Functionally, one of the primary rRNA binding proteins, it binds directly to 16S rRNA where it helps nucleate assembly of the platform of the 30S subunit by binding and bridging several RNA helices of the 16S rRNA. Its function is as follows. Forms an intersubunit bridge (bridge B4) with the 23S rRNA of the 50S subunit in the ribosome. The sequence is that of Small ribosomal subunit protein uS15 from Rickettsia peacockii (strain Rustic).